The chain runs to 506 residues: ATP synthase subunit alpha (506 aa).

Position 170 to 177 (170 to 177) interacts with ATP; that stretch reads GDRQTGKT.

The protein belongs to the ATPase alpha/beta chains family. In terms of assembly, F-type ATPases have 2 components, CF(1) - the catalytic core - and CF(0) - the membrane proton channel. CF(1) has five subunits: alpha(3), beta(3), gamma(1), delta(1), epsilon(1). CF(0) has four main subunits: a(1), b(1), b'(1) and c(9-12).

The protein localises to the cellular thylakoid membrane. It carries out the reaction ATP + H2O + 4 H(+)(in) = ADP + phosphate + 5 H(+)(out). Its function is as follows. Produces ATP from ADP in the presence of a proton gradient across the membrane. The alpha chain is a regulatory subunit. In Synechococcus sp. (strain CC9605), this protein is ATP synthase subunit alpha.